We begin with the raw amino-acid sequence, 426 residues long: Serine--tRNA ligase (426 aa).

L-serine is bound at residue 230–232; that stretch reads TAE. 261–263 contacts ATP; that stretch reads RSE. Glu-284 is a binding site for L-serine. 348–351 provides a ligand contact to ATP; that stretch reads EISS. Ser-384 serves as a coordination point for L-serine.

Belongs to the class-II aminoacyl-tRNA synthetase family. Type-1 seryl-tRNA synthetase subfamily. Homodimer. The tRNA molecule binds across the dimer.

It localises to the cytoplasm. The enzyme catalyses tRNA(Ser) + L-serine + ATP = L-seryl-tRNA(Ser) + AMP + diphosphate + H(+). It catalyses the reaction tRNA(Sec) + L-serine + ATP = L-seryl-tRNA(Sec) + AMP + diphosphate + H(+). It functions in the pathway aminoacyl-tRNA biosynthesis; selenocysteinyl-tRNA(Sec) biosynthesis; L-seryl-tRNA(Sec) from L-serine and tRNA(Sec): step 1/1. Catalyzes the attachment of serine to tRNA(Ser). Is also able to aminoacylate tRNA(Sec) with serine, to form the misacylated tRNA L-seryl-tRNA(Sec), which will be further converted into selenocysteinyl-tRNA(Sec). The polypeptide is Serine--tRNA ligase (Streptococcus mutans serotype c (strain ATCC 700610 / UA159)).